The primary structure comprises 106 residues: uncharacterized protein (106 aa).

A helical membrane pass occupies residues 9-27 (ALAALAFTLGLIGLAAWAL). The disordered stretch occupies residues 84 to 106 (TPKGPPPASALSPSPVAEPEPVV).

This sequence belongs to the FliO/MopB family.

It localises to the cell membrane. It is found in the bacterial flagellum basal body. This is an uncharacterized protein from Caulobacter vibrioides (strain ATCC 19089 / CIP 103742 / CB 15) (Caulobacter crescentus).